Here is a 276-residue protein sequence, read N- to C-terminus: Light-independent protochlorophyllide reductase iron-sulfur ATP-binding protein (276 aa).

ATP is bound by residues 12 to 17 (GIGKST) and K41. S16 serves as a coordination point for Mg(2+). The [4Fe-4S] cluster site is built by C97 and C131. 182–183 (NR) serves as a coordination point for ATP.

Belongs to the NifH/BchL/ChlL family. As to quaternary structure, homodimer. Protochlorophyllide reductase is composed of three subunits; BchL, BchN and BchB. The cofactor is [4Fe-4S] cluster.

It catalyses the reaction chlorophyllide a + oxidized 2[4Fe-4S]-[ferredoxin] + 2 ADP + 2 phosphate = protochlorophyllide a + reduced 2[4Fe-4S]-[ferredoxin] + 2 ATP + 2 H2O. It functions in the pathway porphyrin-containing compound metabolism; bacteriochlorophyll biosynthesis (light-independent). Component of the dark-operative protochlorophyllide reductase (DPOR) that uses Mg-ATP and reduced ferredoxin to reduce ring D of protochlorophyllide (Pchlide) to form chlorophyllide a (Chlide). This reaction is light-independent. The L component serves as a unique electron donor to the NB-component of the complex, and binds Mg-ATP. The sequence is that of Light-independent protochlorophyllide reductase iron-sulfur ATP-binding protein from Chlorobium chlorochromatii (strain CaD3).